The chain runs to 199 residues: MNPRKKVDLKLIIVGALGVGKTSLLHQYVHKTFFEEYQTTLGASILSKIIILDDTTLKLQIWDTGGQERFRSMVSTFYKGSDGCILAFDVTDPESFEALDIWRDDVLAKIIPMEQSYPMVVLGNKIDLEDRKVSQEVVHGWCKEKDMPYFEVSAKNDINVVQAFEVLASRALLRYQGTAENHLIDSIKLSPGQPKSRCC.

GTP contacts are provided by residues 15–22 (GALGVGKT), 34–40 (FEEYQTT), 63–67 (DTGGQ), 124–127 (NKID), and 154–155 (AK). 2 consecutive short sequence motifs (switch) follow at residues 28–41 (YVHKTFFEEYQTTL) and 67–82 (QERFRSMVSTFYKGSD). A Phosphoserine modification is found at Ser-186. 2 S-geranylgeranyl cysteine lipidation sites follow: Cys-198 and Cys-199.

This sequence belongs to the small GTPase superfamily. Rab family.

It localises to the late endosome. The protein localises to the lysosome. Its subcellular location is the golgi apparatus. The protein resides in the trans-Golgi network. It is found in the cytoplasmic vesicle. It localises to the phagosome. The protein localises to the phagosome membrane. Controls vesicular trafficking from endosomes to the trans-Golgi network (TGN). Acts as a negative regulator of TLR9 signaling and can suppress TLR9-triggered TNFA, IL6, and IFNB production in macrophages by promoting TLR9 lysosomal degradation. Also negatively regulates TLR4 signaling in macrophages by promoting lysosomal degradation of TLR4. Promotes megakaryocytic differentiation by increasing NF-kappa-B-dependent IL6 production and subsequently enhancing the association of STAT3 with GATA1. Not involved in the regulation of the EGF- and EGFR degradation pathway. The sequence is that of Ras-related protein Rab-7b (Rab7b) from Mus musculus (Mouse).